The primary structure comprises 109 residues: Nucleoid-associated protein ECA1177 (109 aa).

This sequence belongs to the YbaB/EbfC family. In terms of assembly, homodimer.

It localises to the cytoplasm. The protein localises to the nucleoid. Its function is as follows. Binds to DNA and alters its conformation. May be involved in regulation of gene expression, nucleoid organization and DNA protection. This is Nucleoid-associated protein ECA1177 from Pectobacterium atrosepticum (strain SCRI 1043 / ATCC BAA-672) (Erwinia carotovora subsp. atroseptica).